The chain runs to 283 residues: ATP phosphoribosyltransferase (283 aa).

This sequence belongs to the ATP phosphoribosyltransferase family. Long subfamily. Mg(2+) is required as a cofactor.

It is found in the cytoplasm. The enzyme catalyses 1-(5-phospho-beta-D-ribosyl)-ATP + diphosphate = 5-phospho-alpha-D-ribose 1-diphosphate + ATP. It functions in the pathway amino-acid biosynthesis; L-histidine biosynthesis; L-histidine from 5-phospho-alpha-D-ribose 1-diphosphate: step 1/9. With respect to regulation, feedback inhibited by histidine. In terms of biological role, catalyzes the condensation of ATP and 5-phosphoribose 1-diphosphate to form N'-(5'-phosphoribosyl)-ATP (PR-ATP). Has a crucial role in the pathway because the rate of histidine biosynthesis seems to be controlled primarily by regulation of HisG enzymatic activity. The chain is ATP phosphoribosyltransferase from Parabacteroides distasonis (strain ATCC 8503 / DSM 20701 / CIP 104284 / JCM 5825 / NCTC 11152).